A 223-amino-acid polypeptide reads, in one-letter code: Uracil-DNA glycosylase (223 aa).

The Proton acceptor role is filled by Asp-67.

It belongs to the uracil-DNA glycosylase (UDG) superfamily. UNG family.

It localises to the cytoplasm. The catalysed reaction is Hydrolyzes single-stranded DNA or mismatched double-stranded DNA and polynucleotides, releasing free uracil.. Functionally, excises uracil residues from the DNA which can arise as a result of misincorporation of dUMP residues by DNA polymerase or due to deamination of cytosine. This chain is Uracil-DNA glycosylase, found in Borreliella burgdorferi (strain ZS7) (Borrelia burgdorferi).